Here is a 145-residue protein sequence, read N- to C-terminus: Lysozyme C (145 aa).

An N-terminal signal peptide occupies residues 1–19 (MLFFGFLLAFLSAVPGTEG). The C-type lysozyme domain occupies 20-145 (EIIPRCELVK…RDLSSYVKGC (126 aa)). 4 disulfide bridges follow: C25–C145, C49–C133, C82–C98, and C94–C112. Active-site residues include E54 and D70.

The protein belongs to the glycosyl hydrolase 22 family. In terms of assembly, monomer.

The protein localises to the secreted. It carries out the reaction Hydrolysis of (1-&gt;4)-beta-linkages between N-acetylmuramic acid and N-acetyl-D-glucosamine residues in a peptidoglycan and between N-acetyl-D-glucosamine residues in chitodextrins.. Lysozymes have primarily a bacteriolytic function; those in tissues and body fluids are associated with the monocyte-macrophage system and enhance the activity of immunoagents. This chain is Lysozyme C (LYZ), found in Opisthocomus hoazin (Hoatzin).